We begin with the raw amino-acid sequence, 35 residues long: Photosystem II reaction center protein T (35 aa).

A helical membrane pass occupies residues 3-23 (ALVYTFLLVGTLGIIFFAIFF).

Belongs to the PsbT family. PSII is composed of 1 copy each of membrane proteins PsbA, PsbB, PsbC, PsbD, PsbE, PsbF, PsbH, PsbI, PsbJ, PsbK, PsbL, PsbM, PsbT, PsbY, PsbZ, Psb30/Ycf12, at least 3 peripheral proteins of the oxygen-evolving complex and a large number of cofactors. It forms dimeric complexes.

The protein resides in the plastid. The protein localises to the chloroplast thylakoid membrane. Found at the monomer-monomer interface of the photosystem II (PS II) dimer, plays a role in assembly and dimerization of PSII. PSII is a light-driven water plastoquinone oxidoreductase, using light energy to abstract electrons from H(2)O, generating a proton gradient subsequently used for ATP formation. The polypeptide is Photosystem II reaction center protein T (Chara vulgaris (Common stonewort)).